The chain runs to 572 residues: MDPRAPRRRHTHQRGYLLTRDPHLNKDLAFTLEERQQLKIHGLLPPCIVNQEIQVLRVIKNFERLNSDFDRYLLLMDLQDRNEKLFYSVLMSNVEKFMPIVYTPTVGLACQQYSLAFRKPRGLFISIHDKGHIASVLNAWPEDVVKAIVVTDGERILGLGDLGCNGMGIPVGKLALYTACGGVNPQQCLPITLDVGTENEELLKDPLYIGLRHRRVRGPEYDAFLDEFMEAASSKYGMNCLIQFEDFANLNAFRLLNKYRNKYCTFNDDIQGTASVAVAGLLAALRITKNKLSDQTVLFQGAGEAALGIAHLIVMAMEKEGLSKEKARQKIWLVDSKGLIVKGRASLTEEKEVFAHEHEEMKNLEAIVQKIKPTALIGVAAIGGAFTEQILKDMAAFNERPIIFALSNPTSKAECSAEECYKVTKGRAIFASGSPFDPVTLPDGRTLFPGQGNNSYVFPGVALGVVACGLRHINDSVFLTTAEVISQQVSDKHLEEGRLYPPLNTIRDVSLKIAVKIVQDAYKEKMATVYPEPQNKEEFVSSQMYSTNYDQILPDCYSWPEEVQKIQTKVNQ.

N-acetylmethionine is present on Met-1. The Proton donor role is filled by Tyr-102. Arg-155 is an NADP(+) binding site. Lys-173 functions as the Proton acceptor in the catalytic mechanism. A divalent metal cation contacts are provided by Glu-245, Asp-246, and Asp-269. NADP(+) contacts are provided by residues Asp-269 and 301-318; that span reads GAGE…MAME. Ser-336 bears the Phosphoserine mark. Asn-408 contacts NADP(+).

This sequence belongs to the malic enzymes family. Homotetramer. Requires Mg(2+) as cofactor. The cofactor is Mn(2+). As to expression, ubiquitous. Up-regulated by 3,5,3'-triiodo-L-thyronine in the liver, kidney and heart.

The protein localises to the cytoplasm. It carries out the reaction (S)-malate + NADP(+) = pyruvate + CO2 + NADPH. The catalysed reaction is oxaloacetate + H(+) = pyruvate + CO2. Catalyzes the oxidative decarboxylation of (S)-malate in the presence of NADP(+) and divalent metal ions, and decarboxylation of oxaloacetate. This Rattus norvegicus (Rat) protein is NADP-dependent malic enzyme (Me1).